The sequence spans 810 residues: RING finger protein unkempt homolog (810 aa).

Residues 1–24 (MSKGPGPGGSAASSAPPAATAQVL) are disordered. A compositionally biased stretch (low complexity) spans 10 to 19 (SAASSAPPAA). 5 C3H1-type zinc fingers span residues 84–113 (YSPD…HRTT), 124–154 (YYKT…HGPH), 215–241 (NYKT…HNSK), 251–285 (KYRS…HTRT), and 293–321 (IYKS…HIEP). The segment at 239–265 (NSKDRRRSPRKHKYRSSPCPNVKHGDE) is disordered. Ser240 carries the phosphoserine modification. Residues 241-253 (KDRRRSPRKHKYR) are compositionally biased toward basic residues. A phosphoserine mark is found at Ser374, Ser378, Ser385, and Ser394. A disordered region spans residues 478 to 497 (TSSLAATPPSPAGTNSTPGM). The residue at position 631 (Ser631) is a Phosphoserine. Positions 643–727 (GAAELARLRQ…ERLHTVPEAQ (85 aa)) form a coiled coil. The RING-type; degenerate zinc finger occupies 766-801 (SVKCLKCQEQTRAVLPCQHAVLCELCAEGSECPVCQ).

It belongs to the unkempt family.

Its subcellular location is the cytoplasm. In terms of biological role, sequence-specific RNA-binding protein which plays an important role in the establishment and maintenance of the early morphology of cortical neurons during embryonic development. Acts as a translation repressor and controls a translationally regulated cell morphology program to ensure proper structuring of the nervous system. Translational control depends on recognition of its binding element within target mRNAs which consists of a mandatory UAG trimer upstream of a U/A-rich motif. Associated with polysomes. This Mus musculus (Mouse) protein is RING finger protein unkempt homolog (Unk).